Consider the following 331-residue polypeptide: Anthranilate phosphoribosyltransferase (331 aa).

5-phospho-alpha-D-ribose 1-diphosphate contacts are provided by residues Gly79, 82–83 (GD), Thr87, 89–92 (NIST), 107–115 (KHGNYGATS), and Ala119. An anthranilate-binding site is contributed by Gly79. Mg(2+) is bound at residue Ser91. Residue Asn110 coordinates anthranilate. An anthranilate-binding site is contributed by Arg165. Mg(2+) is bound by residues Asp223 and Glu224.

It belongs to the anthranilate phosphoribosyltransferase family. As to quaternary structure, homodimer. It depends on Mg(2+) as a cofactor.

It carries out the reaction N-(5-phospho-beta-D-ribosyl)anthranilate + diphosphate = 5-phospho-alpha-D-ribose 1-diphosphate + anthranilate. It participates in amino-acid biosynthesis; L-tryptophan biosynthesis; L-tryptophan from chorismate: step 2/5. Its function is as follows. Catalyzes the transfer of the phosphoribosyl group of 5-phosphorylribose-1-pyrophosphate (PRPP) to anthranilate to yield N-(5'-phosphoribosyl)-anthranilate (PRA). This Bacteroides fragilis (strain ATCC 25285 / DSM 2151 / CCUG 4856 / JCM 11019 / LMG 10263 / NCTC 9343 / Onslow / VPI 2553 / EN-2) protein is Anthranilate phosphoribosyltransferase.